The following is a 78-amino-acid chain: Large ribosomal subunit protein bL28 (78 aa).

This sequence belongs to the bacterial ribosomal protein bL28 family.

This chain is Large ribosomal subunit protein bL28, found in Prochlorococcus marinus (strain MIT 9303).